The sequence spans 380 residues: Geranylgeranyl pyrophosphate synthase cle6 (380 aa).

Positions methionine 1–methionine 19 are enriched in low complexity. The segment at methionine 1–glutamine 55 is disordered. The segment covering histidine 45 to glutamine 55 has biased composition (polar residues). 3 residues coordinate isopentenyl diphosphate: lysine 102, arginine 105, and histidine 134. Residues aspartate 141 and aspartate 145 each contribute to the Mg(2+) site. Arginine 150 lines the dimethylallyl diphosphate pocket. Arginine 151 lines the isopentenyl diphosphate pocket. Lysine 229, threonine 230, and glutamine 263 together coordinate dimethylallyl diphosphate. Position 266 (aspartate 266) interacts with Mg(2+). Dimethylallyl diphosphate is bound by residues asparagine 270, lysine 280, and lysine 290.

The protein belongs to the FPP/GGPP synthase family. The cofactor is Mg(2+).

It catalyses the reaction isopentenyl diphosphate + dimethylallyl diphosphate = (2E)-geranyl diphosphate + diphosphate. The catalysed reaction is isopentenyl diphosphate + (2E)-geranyl diphosphate = (2E,6E)-farnesyl diphosphate + diphosphate. It carries out the reaction isopentenyl diphosphate + (2E,6E)-farnesyl diphosphate = (2E,6E,10E)-geranylgeranyl diphosphate + diphosphate. The protein operates within secondary metabolite biosynthesis; terpenoid biosynthesis. In terms of biological role, geranylgeranyl pyrophosphate synthase; part of the cluster A that mediates the biosynthesis of chevalone E and its oxidized derivatives that possess a unique five-membered lactone ring and can synergistically enhance the cytotoxicity of doxorubicin (DOX) in breast cancer cells. Within the pathway, cle6 takes part to the biosynthesis of the molecular scaffold by providing geranylgeranyl pyrophosphate (GGPP) to the prenyltransferase cle5 for C-3 geranylgeranylation of triacetic acid lactone. The molecular scaffold is commonly biosynthesized by a series of enzymes including the non-reducing polyketide synthase (NR-PKS) cle1 that produces the alpha-pyrone triacetic acid lactone (TAL); The membrane-bound prenyltransferase cle5 that accepts TAL as its substrate to perform a C-3 geranylgeranylation reaction, in which the pathway-dedicated GGPS cle6 is required to provide GGPP, the other substrate of cle5; the FAD-dependent monooxygenase Cle3 that forms an (S)-epoxide ring at the terminal olefin of the geranylgeranyl group; and the terpene cyclase Cle7 that catalyzes the cyclization of the prenyl group that yields the pentacyclic pathway intermediate chevalone E. Chevalone E can derivatize into seven new oxidized analogs by the cytochrome P450 monooxygenases cle2 (acting at C-20) and cle4 (acting at C-11 and C-12). This chain is Geranylgeranyl pyrophosphate synthase cle6, found in Aspergillus versicolor.